Consider the following 112-residue polypeptide: Cell cycle protein GpsB (112 aa).

Positions 38 to 72 (IKDYEAFHKEFEQLKQQNARLKRELEEQKLAATQV) form a coiled coil.

This sequence belongs to the GpsB family. Forms polymers through the coiled coil domains. Interacts with PBP1, MreC and EzrA.

The protein localises to the cytoplasm. In terms of biological role, divisome component that associates with the complex late in its assembly, after the Z-ring is formed, and is dependent on DivIC and PBP2B for its recruitment to the divisome. Together with EzrA, is a key component of the system that regulates PBP1 localization during cell cycle progression. Its main role could be the removal of PBP1 from the cell pole after pole maturation is completed. Also contributes to the recruitment of PBP1 to the division complex. Not essential for septum formation. The chain is Cell cycle protein GpsB from Bacillus anthracis (strain A0248).